Consider the following 133-residue polypeptide: Ribosome-binding factor A (133 aa).

It belongs to the RbfA family. In terms of assembly, monomer. Binds 30S ribosomal subunits, but not 50S ribosomal subunits or 70S ribosomes.

The protein resides in the cytoplasm. Its function is as follows. One of several proteins that assist in the late maturation steps of the functional core of the 30S ribosomal subunit. Associates with free 30S ribosomal subunits (but not with 30S subunits that are part of 70S ribosomes or polysomes). Required for efficient processing of 16S rRNA. May interact with the 5'-terminal helix region of 16S rRNA. The sequence is that of Ribosome-binding factor A from Salmonella schwarzengrund (strain CVM19633).